The chain runs to 336 residues: MGNCLHRAELSPSTENSSQLDFEDVWNSSYGVNDSFPDGDYGANLEAAAPCHSCNLLDDSALPFFILTSVLGILASSTVLFMLFRPLFRWQLCPGWPVLAQLAVGSALFSIVVPVLAPGLGSTRSSALCSLGYCVWYGSAFAQALLLGCHASLGHRLGAGQVPGLTLGLTVGIWGVAALLTLPVTLASGASGGLCTLIYSTELKALQATHTVACLAIFVLLPLGLFGAKGLKKALGMGPGPWMNILWAWFIFWWPHGVVLGLDFLVRSKLLLLSTCLAQQALDLLLNLAEALAILHCVATPLLLALFCHQATRTLLPSLPLPEGWSSHLDTLGSKS.

A mediates Plasmodium vivax Duffy receptor (PVDR) binding region spans residues 1–30 (MGNCLHRAELSPSTENSSQLDFEDVWNSSY). Topologically, residues 1–63 (MGNCLHRAEL…CNLLDDSALP (63 aa)) are extracellular. Residue Asn-16 is glycosylated (N-linked (GlcNAc...) asparagine). Tyr-30 carries the post-translational modification Sulfotyrosine. A glycan (N-linked (GlcNAc...) asparagine) is linked at Asn-33. Residue Tyr-41 is modified to Sulfotyrosine. Cystine bridges form between Cys-51/Cys-276 and Cys-129/Cys-195. The chain crosses the membrane as a helical span at residues 64 to 84 (FFILTSVLGILASSTVLFMLF). The Cytoplasmic portion of the chain corresponds to 85 to 95 (RPLFRWQLCPG). A helical transmembrane segment spans residues 96 to 116 (WPVLAQLAVGSALFSIVVPVL). At 117–129 (APGLGSTRSSALC) the chain is on the extracellular side. A helical transmembrane segment spans residues 130–153 (SLGYCVWYGSAFAQALLLGCHASL). Topologically, residues 154-166 (GHRLGAGQVPGLT) are cytoplasmic. Residues 167–187 (LGLTVGIWGVAALLTLPVTLA) form a helical membrane-spanning segment. Residues 188-207 (SGASGGLCTLIYSTELKALQ) lie on the Extracellular side of the membrane. The helical transmembrane segment at 208-228 (ATHTVACLAIFVLLPLGLFGA) threads the bilayer. The Cytoplasmic portion of the chain corresponds to 229–244 (KGLKKALGMGPGPWMN). Residues 245 to 265 (ILWAWFIFWWPHGVVLGLDFL) form a helical membrane-spanning segment. The Extracellular segment spans residues 266 to 287 (VRSKLLLLSTCLAQQALDLLLN). Residues 288 to 308 (LAEALAILHCVATPLLLALFC) traverse the membrane as a helical segment. The Cytoplasmic portion of the chain corresponds to 309–336 (HQATRTLLPSLPLPEGWSSHLDTLGSKS).

Belongs to the G-protein coupled receptor 1 family. Atypical chemokine receptor subfamily. (Microbial infection) Interacts (via N-terminal extracellular domain) with Plasmodium vivax Duffy receptor (PVDR) (via PvRII region). As to quaternary structure, (Microbial infection) Interacts (via N-terminal extracellular domain) with Plasmodium knowlesi Duffy receptor alpha form (DBPalpha) (via region II). In terms of processing, sulfation at Tyr-41 facilitates interaction with MGSA/CXCL1, RANTES/CCL5 and MCP-1/CCL2 but not IL8/CXCL8. Sulfation at Tyr-30 facilitates interaction with IL8/CXCL8. Post-translationally, (Microbial infection) Sulfation at Tyr-41 facilitates interaction with Plasmodium vivax Duffy receptor (PVDR). Sulfation at Tyr-30/Tyr-41 and Tyr-41 alone increases binding affinity of Plasmodium vivax parasites and likely promotes invasion of red blood cells. (Microbial infection) Sulfation at Tyr-41 facilitates interaction with Plasmodium knowlesi Duffy receptor alpha form (DBPalpha). Sulfation at Tyr-30/Tyr-41 and Tyr-41 alone increases binding affinity of Plasmodium knowlesi parasites and likely promotes invasion of red blood cells. As to expression, found in adult kidney, adult spleen, bone marrow and fetal liver. In particular, it is expressed along postcapillary venules throughout the body, except in the adult liver. Erythroid cells and postcapillary venule endothelium are the principle tissues expressing duffy. Fy(-A-B) individuals do not express duffy in the bone marrow, however they do, in postcapillary venule endothelium.

It is found in the early endosome. The protein resides in the recycling endosome. The protein localises to the membrane. Functionally, atypical chemokine receptor that controls chemokine levels and localization via high-affinity chemokine binding that is uncoupled from classic ligand-driven signal transduction cascades, resulting instead in chemokine sequestration, degradation, or transcytosis. Also known as interceptor (internalizing receptor) or chemokine-scavenging receptor or chemokine decoy receptor. Has a promiscuous chemokine-binding profile, interacting with inflammatory chemokines of both the CXC and the CC subfamilies but not with homeostatic chemokines. Acts as a receptor for chemokines including CCL2, CCL5, CCL7, CCL11, CCL13, CCL14, CCL17, CXCL5, CXCL6, IL8/CXCL8, CXCL11, GRO, RANTES, MCP-1 and TARC. May regulate chemokine bioavailability and, consequently, leukocyte recruitment through two distinct mechanisms: when expressed in endothelial cells, it sustains the abluminal to luminal transcytosis of tissue-derived chemokines and their subsequent presentation to circulating leukocytes; when expressed in erythrocytes, serves as blood reservoir of cognate chemokines but also as a chemokine sink, buffering potential surges in plasma chemokine levels. (Microbial infection) Acts as a receptor for the malaria parasite Plasmodium vivax. In terms of biological role, (Microbial infection) Acts as a receptor for the malaria parasite Plasmodium knowlesi. The chain is Atypical chemokine receptor 1 (ACKR1) from Homo sapiens (Human).